The primary structure comprises 640 residues: UvrABC system protein C (640 aa).

Residues 22–101 (NDPGCYLMKD…IKSHQPYFNV (80 aa)) enclose the GIY-YIG domain. The UVR domain maps to 211–246 (DELRILLEKQMISFSESLKFEEAGSVRDQLKGIDRL).

It belongs to the UvrC family. In terms of assembly, interacts with UvrB in an incision complex.

The protein localises to the cytoplasm. In terms of biological role, the UvrABC repair system catalyzes the recognition and processing of DNA lesions. UvrC both incises the 5' and 3' sides of the lesion. The N-terminal half is responsible for the 3' incision and the C-terminal half is responsible for the 5' incision. The chain is UvrABC system protein C from Prochlorococcus marinus (strain NATL1A).